The primary structure comprises 324 residues: Glyoxylate/hydroxypyruvate reductase B (324 aa).

Residues Arg237 and Glu266 contribute to the active site. His285 acts as the Proton donor in catalysis.

This sequence belongs to the D-isomer specific 2-hydroxyacid dehydrogenase family. GhrB subfamily. Homodimer.

Its subcellular location is the cytoplasm. The catalysed reaction is glycolate + NADP(+) = glyoxylate + NADPH + H(+). It catalyses the reaction (R)-glycerate + NAD(+) = 3-hydroxypyruvate + NADH + H(+). The enzyme catalyses (R)-glycerate + NADP(+) = 3-hydroxypyruvate + NADPH + H(+). Catalyzes the NADPH-dependent reduction of glyoxylate and hydroxypyruvate into glycolate and glycerate, respectively. The chain is Glyoxylate/hydroxypyruvate reductase B from Shigella sonnei (strain Ss046).